The chain runs to 171 residues: Dual-action ribosomal maturation protein DarP (171 aa).

Residues 1–30 (MPKRPAENPEQSDDFVSKSQKKREMAERQE) are disordered.

The protein belongs to the DarP family.

The protein localises to the cytoplasm. Member of a network of 50S ribosomal subunit biogenesis factors which assembles along the 30S-50S interface, preventing incorrect 23S rRNA structures from forming. Promotes peptidyl transferase center (PTC) maturation. The chain is Dual-action ribosomal maturation protein DarP from Idiomarina loihiensis (strain ATCC BAA-735 / DSM 15497 / L2-TR).